Consider the following 331-residue polypeptide: CRISPR-associated endonuclease Cas1 (331 aa).

Positions 158, 223, and 238 each coordinate Mn(2+).

The protein belongs to the CRISPR-associated endonuclease Cas1 family. In terms of assembly, homodimer, forms a heterotetramer with a Cas2 homodimer. Mg(2+) is required as a cofactor. It depends on Mn(2+) as a cofactor.

Its function is as follows. CRISPR (clustered regularly interspaced short palindromic repeat), is an adaptive immune system that provides protection against mobile genetic elements (viruses, transposable elements and conjugative plasmids). CRISPR clusters contain spacers, sequences complementary to antecedent mobile elements, and target invading nucleic acids. CRISPR clusters are transcribed and processed into CRISPR RNA (crRNA). Acts as a dsDNA endonuclease. Involved in the integration of spacer DNA into the CRISPR cassette. Plasmid targeted by CRISPR locus P1 transform wild-type cells very poorly. The polypeptide is CRISPR-associated endonuclease Cas1 (Haloferax volcanii (strain ATCC 29605 / DSM 3757 / JCM 8879 / NBRC 14742 / NCIMB 2012 / VKM B-1768 / DS2) (Halobacterium volcanii)).